A 214-amino-acid chain; its full sequence is ATP phosphoribosyltransferase (214 aa).

This sequence belongs to the ATP phosphoribosyltransferase family. Short subfamily. Heteromultimer composed of HisG and HisZ subunits.

Its subcellular location is the cytoplasm. The enzyme catalyses 1-(5-phospho-beta-D-ribosyl)-ATP + diphosphate = 5-phospho-alpha-D-ribose 1-diphosphate + ATP. It participates in amino-acid biosynthesis; L-histidine biosynthesis; L-histidine from 5-phospho-alpha-D-ribose 1-diphosphate: step 1/9. Functionally, catalyzes the condensation of ATP and 5-phosphoribose 1-diphosphate to form N'-(5'-phosphoribosyl)-ATP (PR-ATP). Has a crucial role in the pathway because the rate of histidine biosynthesis seems to be controlled primarily by regulation of HisG enzymatic activity. This is ATP phosphoribosyltransferase from Leptothrix cholodnii (strain ATCC 51168 / LMG 8142 / SP-6) (Leptothrix discophora (strain SP-6)).